The primary structure comprises 399 residues: Argininosuccinate synthase (399 aa).

8–16 (AYSGGLDTS) serves as a coordination point for ATP. Y87 serves as a coordination point for L-citrulline. G117 contacts ATP. Positions 119, 123, and 124 each coordinate L-aspartate. N123 is a binding site for L-citrulline. R127, S175, E259, and Y271 together coordinate L-citrulline.

The protein belongs to the argininosuccinate synthase family. Type 1 subfamily. Homotetramer.

It localises to the cytoplasm. It carries out the reaction L-citrulline + L-aspartate + ATP = 2-(N(omega)-L-arginino)succinate + AMP + diphosphate + H(+). It functions in the pathway amino-acid biosynthesis; L-arginine biosynthesis; L-arginine from L-ornithine and carbamoyl phosphate: step 2/3. The chain is Argininosuccinate synthase from Corynebacterium diphtheriae (strain ATCC 700971 / NCTC 13129 / Biotype gravis).